The primary structure comprises 793 residues: Phenylalanine--tRNA ligase beta subunit (793 aa).

The tRNA-binding domain maps to 39 to 148 (AAPFKGVKAA…EGDFPGVDLH (110 aa)). The B5 domain occupies 401 to 476 (PPQATIILRK…RLYGYDRLPS (76 aa)). Residues D454, D460, E463, and E464 each contribute to the Mg(2+) site. Residues 699–792 (SKFPAIRRDI…LVTELGAIIR (94 aa)) form the FDX-ACB domain.

The protein belongs to the phenylalanyl-tRNA synthetase beta subunit family. Type 1 subfamily. As to quaternary structure, tetramer of two alpha and two beta subunits. Mg(2+) is required as a cofactor.

It is found in the cytoplasm. It carries out the reaction tRNA(Phe) + L-phenylalanine + ATP = L-phenylalanyl-tRNA(Phe) + AMP + diphosphate + H(+). This chain is Phenylalanine--tRNA ligase beta subunit, found in Nitrosococcus oceani (strain ATCC 19707 / BCRC 17464 / JCM 30415 / NCIMB 11848 / C-107).